We begin with the raw amino-acid sequence, 153 residues long: Ribosome maturation factor RimP (153 aa).

The protein belongs to the RimP family.

The protein resides in the cytoplasm. In terms of biological role, required for maturation of 30S ribosomal subunits. The chain is Ribosome maturation factor RimP from Burkholderia pseudomallei (strain 1710b).